The sequence spans 208 residues: N-(5'-phosphoribosyl)anthranilate isomerase (208 aa).

It belongs to the TrpF family.

It carries out the reaction N-(5-phospho-beta-D-ribosyl)anthranilate = 1-(2-carboxyphenylamino)-1-deoxy-D-ribulose 5-phosphate. It participates in amino-acid biosynthesis; L-tryptophan biosynthesis; L-tryptophan from chorismate: step 3/5. In Staphylococcus haemolyticus (strain JCSC1435), this protein is N-(5'-phosphoribosyl)anthranilate isomerase.